Reading from the N-terminus, the 211-residue chain is HTH-type transcriptional repressor FabR (211 aa).

An HTH tetR-type domain is found at 10-70 (RTRRSLVEAA…TMVDESGLML (61 aa)). A DNA-binding region (H-T-H motif) is located at residues 33–52 (SLREVAREAGIAPTSFYRHF).

As to quaternary structure, homodimer.

It localises to the cytoplasm. Represses the transcription of fabB, involved in unsaturated fatty acid (UFA) biosynthesis. By controlling UFA production, FabR directly influences the physical properties of the membrane bilayer. This chain is HTH-type transcriptional repressor FabR, found in Cronobacter sakazakii (strain ATCC BAA-894) (Enterobacter sakazakii).